We begin with the raw amino-acid sequence, 350 residues long: Phosphoribosylformylglycinamidine cyclo-ligase (350 aa).

Belongs to the AIR synthase family.

It is found in the cytoplasm. It catalyses the reaction 2-formamido-N(1)-(5-O-phospho-beta-D-ribosyl)acetamidine + ATP = 5-amino-1-(5-phospho-beta-D-ribosyl)imidazole + ADP + phosphate + H(+). The protein operates within purine metabolism; IMP biosynthesis via de novo pathway; 5-amino-1-(5-phospho-D-ribosyl)imidazole from N(2)-formyl-N(1)-(5-phospho-D-ribosyl)glycinamide: step 2/2. The polypeptide is Phosphoribosylformylglycinamidine cyclo-ligase (Cupriavidus metallidurans (strain ATCC 43123 / DSM 2839 / NBRC 102507 / CH34) (Ralstonia metallidurans)).